The primary structure comprises 116 residues: Ribonuclease P protein component (116 aa).

It belongs to the RnpA family. In terms of assembly, consists of a catalytic RNA component (M1 or rnpB) and a protein subunit.

It carries out the reaction Endonucleolytic cleavage of RNA, removing 5'-extranucleotides from tRNA precursor.. Functionally, RNaseP catalyzes the removal of the 5'-leader sequence from pre-tRNA to produce the mature 5'-terminus. It can also cleave other RNA substrates such as 4.5S RNA. The protein component plays an auxiliary but essential role in vivo by binding to the 5'-leader sequence and broadening the substrate specificity of the ribozyme. The protein is Ribonuclease P protein component of Citrifermentans bemidjiense (strain ATCC BAA-1014 / DSM 16622 / JCM 12645 / Bem) (Geobacter bemidjiensis).